A 359-amino-acid polypeptide reads, in one-letter code: Alanine racemase, biosynthetic (359 aa).

The Proton acceptor; specific for D-alanine role is filled by lysine 34. Position 34 is an N6-(pyridoxal phosphate)lysine (lysine 34). Arginine 129 serves as a coordination point for substrate. The Proton acceptor; specific for L-alanine role is filled by tyrosine 255. Methionine 303 contributes to the substrate binding site.

This sequence belongs to the alanine racemase family. It depends on pyridoxal 5'-phosphate as a cofactor.

The enzyme catalyses L-alanine = D-alanine. Its pathway is amino-acid biosynthesis; D-alanine biosynthesis; D-alanine from L-alanine: step 1/1. The protein operates within cell wall biogenesis; peptidoglycan biosynthesis. Functionally, catalyzes the interconversion of L-alanine and D-alanine. Provides the D-alanine required for cell wall biosynthesis. The chain is Alanine racemase, biosynthetic (alr) from Escherichia coli O6:H1 (strain CFT073 / ATCC 700928 / UPEC).